A 176-amino-acid polypeptide reads, in one-letter code: Membrane-anchored junction protein (176 aa).

The Nuclear segment spans residues 1 to 151 (MSLKPFTYPF…QHNSPPPKER (151 aa)). The segment at 59-150 (AVMRKRKHMD…LQHNSPPPKE (92 aa)) is disordered. Residues 95–107 (PPVETRRNRERKT) are compositionally biased toward basic and acidic residues. Residues 108-120 (QQGLQETLASDIT) show a composition bias toward polar residues. The helical transmembrane segment at 152–170 (AATGFFGFLSSLFPFRYFF) threads the bilayer. Residues 171–176 (RKSSHS) are Perinuclear space-facing.

Belongs to the MAJIN family. In terms of assembly, component of the MAJIN-TERB1-TERB2 complex, composed of MAJIN, TERB1 and TERB2.

The protein localises to the nucleus inner membrane. The protein resides in the chromosome. Its subcellular location is the telomere. In terms of biological role, meiosis-specific telomere-associated protein involved in meiotic telomere attachment to the nucleus inner membrane, a crucial step for homologous pairing and synapsis. Component of the MAJIN-TERB1-TERB2 complex, which promotes telomere cap exchange by mediating attachment of telomeric DNA to the inner nuclear membrane and replacement of the protective cap of telomeric chromosomes: in early meiosis, the MAJIN-TERB1-TERB2 complex associates with telomeric DNA and the shelterin/telosome complex. During prophase, the complex matures and promotes release of the shelterin/telosome complex from telomeric DNA. In the complex, MAJIN acts as the anchoring subunit to the nucleus inner membrane. MAJIN shows DNA-binding activity, possibly for the stabilization of telomere attachment on the nucleus inner membrane. In Homo sapiens (Human), this protein is Membrane-anchored junction protein.